We begin with the raw amino-acid sequence, 104 residues long: Large ribosomal subunit protein bL21 (104 aa).

This sequence belongs to the bacterial ribosomal protein bL21 family. Part of the 50S ribosomal subunit. Contacts protein L20.

Its function is as follows. This protein binds to 23S rRNA in the presence of protein L20. The polypeptide is Large ribosomal subunit protein bL21 (Tropheryma whipplei (strain Twist) (Whipple's bacillus)).